The primary structure comprises 204 residues: MSNTFEDRIGRAQRKTSESDISVSINLDGSGKTDISTGLPFFDHMLTALGAHGSFDLEVKAVGDVEIDAHHTVEDTGIVLGQALGEALGTKAGIRRFGDAFIPMDECLAHAAVDVSGRPYYVGTGEPDAMVHTVIGGHYATVINQHFFETLALNARIALHVRCLYGRDPHHITEAEYKAVARALRAAVERDERVTGIPSTKGAL.

Belongs to the imidazoleglycerol-phosphate dehydratase family.

It is found in the cytoplasm. It carries out the reaction D-erythro-1-(imidazol-4-yl)glycerol 3-phosphate = 3-(imidazol-4-yl)-2-oxopropyl phosphate + H2O. It functions in the pathway amino-acid biosynthesis; L-histidine biosynthesis; L-histidine from 5-phospho-alpha-D-ribose 1-diphosphate: step 6/9. This chain is Imidazoleglycerol-phosphate dehydratase, found in Corynebacterium urealyticum (strain ATCC 43042 / DSM 7109).